The sequence spans 289 residues: tRNA pseudouridine synthase A (289 aa).

The active-site Nucleophile is Asp-53. Position 119 (Tyr-119) interacts with substrate.

Belongs to the tRNA pseudouridine synthase TruA family. Homodimer.

The catalysed reaction is uridine(38/39/40) in tRNA = pseudouridine(38/39/40) in tRNA. In terms of biological role, formation of pseudouridine at positions 38, 39 and 40 in the anticodon stem and loop of transfer RNAs. This is tRNA pseudouridine synthase A from Corynebacterium glutamicum (strain ATCC 13032 / DSM 20300 / JCM 1318 / BCRC 11384 / CCUG 27702 / LMG 3730 / NBRC 12168 / NCIMB 10025 / NRRL B-2784 / 534).